We begin with the raw amino-acid sequence, 1413 residues long: DNA-directed RNA polymerase subunit beta' (1413 aa).

Zn(2+)-binding residues include C70, C72, C85, and C88. Residues D460, D462, and D464 each coordinate Mg(2+). Zn(2+) is bound by residues C819, C893, C900, and C903.

Belongs to the RNA polymerase beta' chain family. As to quaternary structure, the RNAP catalytic core consists of 2 alpha, 1 beta, 1 beta' and 1 omega subunit. When a sigma factor is associated with the core the holoenzyme is formed, which can initiate transcription. Requires Mg(2+) as cofactor. Zn(2+) is required as a cofactor.

It carries out the reaction RNA(n) + a ribonucleoside 5'-triphosphate = RNA(n+1) + diphosphate. DNA-dependent RNA polymerase catalyzes the transcription of DNA into RNA using the four ribonucleoside triphosphates as substrates. This is DNA-directed RNA polymerase subunit beta' from Burkholderia vietnamiensis (strain G4 / LMG 22486) (Burkholderia cepacia (strain R1808)).